The sequence spans 523 residues: 2-isopropylmalate synthase (523 aa).

Residues 5–267 (VIIFDTTLRD…ETGINAKEIH (263 aa)) enclose the Pyruvate carboxyltransferase domain. Residues Asp14, His202, His204, and Asn238 each contribute to the Mn(2+) site. Residues 392-523 (GLQQLVVHSD…KQARTELGGV (132 aa)) form a regulatory domain region.

The protein belongs to the alpha-IPM synthase/homocitrate synthase family. LeuA type 1 subfamily. In terms of assembly, homodimer. It depends on Mn(2+) as a cofactor.

Its subcellular location is the cytoplasm. It carries out the reaction 3-methyl-2-oxobutanoate + acetyl-CoA + H2O = (2S)-2-isopropylmalate + CoA + H(+). It participates in amino-acid biosynthesis; L-leucine biosynthesis; L-leucine from 3-methyl-2-oxobutanoate: step 1/4. In terms of biological role, catalyzes the condensation of the acetyl group of acetyl-CoA with 3-methyl-2-oxobutanoate (2-ketoisovalerate) to form 3-carboxy-3-hydroxy-4-methylpentanoate (2-isopropylmalate). This Shewanella loihica (strain ATCC BAA-1088 / PV-4) protein is 2-isopropylmalate synthase.